A 313-amino-acid chain; its full sequence is Ribosomal RNA small subunit methyltransferase H (313 aa).

S-adenosyl-L-methionine is bound by residues 35–37 (GGH), D55, F79, D101, and Q108. A disordered region spans residues 276 to 300 (QGGPTLKSVGKMMPPDDEVADNPRA).

Belongs to the methyltransferase superfamily. RsmH family.

It is found in the cytoplasm. The enzyme catalyses cytidine(1402) in 16S rRNA + S-adenosyl-L-methionine = N(4)-methylcytidine(1402) in 16S rRNA + S-adenosyl-L-homocysteine + H(+). Its function is as follows. Specifically methylates the N4 position of cytidine in position 1402 (C1402) of 16S rRNA. This Dickeya chrysanthemi (strain Ech1591) (Dickeya zeae (strain Ech1591)) protein is Ribosomal RNA small subunit methyltransferase H.